The sequence spans 202 residues: Ras-related protein RIC1 (202 aa).

Residues G15–C23, Y33–T40, D63–Q67, N121–D124, and S151–K153 contribute to the GTP site. The Effector region signature appears at Y37–F45. The segment covering A174–A185 has biased composition (polar residues). The disordered stretch occupies residues A174–S202. S-geranylgeranyl cysteine attachment occurs at residues C200 and C201.

It belongs to the small GTPase superfamily. Rab family.

Its subcellular location is the cell membrane. Possesses GTPase activity. The sequence is that of Ras-related protein RIC1 (RIC1) from Oryza sativa subsp. japonica (Rice).